Reading from the N-terminus, the 133-residue chain is ATP synthase epsilon chain (133 aa).

This sequence belongs to the ATPase epsilon chain family. In terms of assembly, F-type ATPases have 2 components, CF(1) - the catalytic core - and CF(0) - the membrane proton channel. CF(1) has five subunits: alpha(3), beta(3), gamma(1), delta(1), epsilon(1). CF(0) has three main subunits: a, b and c.

It localises to the cell membrane. Its function is as follows. Produces ATP from ADP in the presence of a proton gradient across the membrane. This Mycoplasma genitalium (strain ATCC 33530 / DSM 19775 / NCTC 10195 / G37) (Mycoplasmoides genitalium) protein is ATP synthase epsilon chain (atpC).